A 2351-amino-acid chain; its full sequence is Coagulation factor VIII (2351 aa).

Positions 1–19 are cleaved as a signal peptide; that stretch reads MQIELSTCFFLCLLRFCFS. 2 Plastocyanin-like domains span residues 20–198 and 206–348; these read ATRR…LLVC and EKTQ…VDSC. The F5/8 type A 1 domain occupies 20 to 348; the sequence is ATRRYYLGAV…MEAYVKVDSC (329 aa). N-linked (GlcNAc...) asparagine glycosylation occurs at Asn60. The cysteines at positions 172 and 198 are disulfide-linked. A glycan (N-linked (GlcNAc...) asparagine) is linked at Asn258. A disulfide bridge connects residues Cys267 and Cys348. Tyr365 bears the Sulfotyrosine mark. 2 consecutive Plastocyanin-like domains span residues 399-573 and 583-730; these read KTWV…LLIC and NQIM…VSSC. One can recognise an F5/8 type A 2 domain in the interval 399–730; the sequence is KTWVHYIAAE…MTALLKVSSC (332 aa). A disulfide bond links Cys547 and Cys573. Asn601 is a glycosylation site (N-linked (GlcNAc...) asparagine). Cys649 and Cys730 are oxidised to a cystine. Sulfotyrosine is present on residues Tyr737, Tyr738, and Tyr742. Positions 760 to 1667 are b; the sequence is SFSQNSRHPS…NPPVLKRHQR (908 aa). N-linked (GlcNAc...) asparagine glycans are attached at residues Asn776, Asn803, Asn847, and Asn919. 2 disordered regions span residues 906-928 and 941-961; these read STIP…PPSM and FGKK…SEEN. 13 N-linked (GlcNAc...) asparagine glycosylation sites follow: Asn962, Asn982, Asn1020, Asn1024, Asn1074, Asn1085, Asn1204, Asn1274, Asn1278, Asn1301, Asn1319, Asn1431, and Asn1461. Sulfotyrosine is present on residues Tyr1683 and Tyr1699. Plastocyanin-like domains lie at 1713–1877 and 1887–2040; these read KTRH…LLVC and GRQV…SNKC. The F5/8 type A 3 domain occupies 1713–2040; sequence KTRHYFIAAV…TLFLVYSNKC (328 aa). Asn1829 is a glycosylation site (N-linked (GlcNAc...) asparagine). 4 cysteine pairs are disulfide-bonded: Cys1851/Cys1877, Cys1918/Cys1922, Cys2040/Cys2188, and Cys2193/Cys2345. F5/8 type C domains follow at residues 2040–2188 and 2193–2345; these read CQTP…LMGC and CSMP…VLGC. Residue Asn2137 is glycosylated (N-linked (GlcNAc...) asparagine).

The protein belongs to the multicopper oxidase family. In terms of assembly, interacts with VWF/vWF. vWF binding is essential for the stabilization of F8 in circulation. Sulfation on Tyr-1699 is essential for binding vWF. In terms of processing, proteolytically cleaved by cathepsin CTSG to produce a partially activated form.

The protein resides in the secreted. It is found in the extracellular space. Factor VIII, along with calcium and phospholipid, acts as a cofactor for F9/factor IXa when it converts F10/factor X to the activated form, factor Xa. The protein is Coagulation factor VIII (F8) of Homo sapiens (Human).